The following is a 225-amino-acid chain: Germin-like protein 3-1 (225 aa).

Positions M1 to C22 are cleaved as a signal peptide. A disulfide bridge connects residues C31 and C51. The region spanning S65–Q216 is the Cupin type-1 domain. N-linked (GlcNAc...) asparagine glycosylation is present at N81. Residues H115, H117, E122, and H161 each coordinate Mn(2+).

This sequence belongs to the germin family. In terms of assembly, oligomer (believed to be a pentamer but probably hexamer).

The protein resides in the secreted. Its subcellular location is the extracellular space. It localises to the apoplast. In terms of biological role, may play a role in plant defense. Probably has no oxalate oxidase activity even if the active site is conserved. The protein is Germin-like protein 3-1 of Oryza sativa subsp. japonica (Rice).